The primary structure comprises 665 residues: Methionine--tRNA ligase (665 aa).

A 'HIGH' region motif is present at residues 12–22 (YYPSGKLHIGS). The 'KMSKS' region motif lies at 308–312 (KMSKS). Residue Lys311 participates in ATP binding. The 104-residue stretch at 562–665 (TFDAVEIRVA…SSVPNGSIIG (104 aa)) folds into the tRNA-binding domain.

The protein belongs to the class-I aminoacyl-tRNA synthetase family. MetG type 2B subfamily. Homodimer.

It is found in the cytoplasm. The enzyme catalyses tRNA(Met) + L-methionine + ATP = L-methionyl-tRNA(Met) + AMP + diphosphate. In terms of biological role, is required not only for elongation of protein synthesis but also for the initiation of all mRNA translation through initiator tRNA(fMet) aminoacylation. In Streptococcus pyogenes serotype M3 (strain SSI-1), this protein is Methionine--tRNA ligase (metG).